The following is a 92-amino-acid chain: Plasmid copy control protein CopR (92 aa).

Residues 1–27 show a composition bias toward basic and acidic residues; that stretch reads MELAFRESLKKMRGTKSKEKFSQELEM. Disordered stretches follow at residues 1–40 and 63–92; these read MELA…SGKS and IPNE…NDFV. The region spanning 9–62 is the HTH cro/C1-type domain; the sequence is LKKMRGTKSKEKFSQELEMSRSNYSRIESGKSDPTIKTLEQIVKLTNSTLVVDL. Residues 20–39 constitute a DNA-binding region (H-T-H motif); it reads KFSQELEMSRSNYSRIESGK.

In terms of biological role, involved in copy control of plasmid pIP501. The polypeptide is Plasmid copy control protein CopR (copR) (Streptococcus agalactiae).